The primary structure comprises 349 residues: Core protein VP7 (349 aa).

Residues asparagine 148 and asparagine 287 are each glycosylated (N-linked (GlcNAc...) asparagine; by host).

The protein belongs to the orbivirus VP7 family.

It is found in the virion. Functionally, the VP7 protein is one of the five proteins (with VP1, VP3, VP4, and VP6) which form the inner capsid of the virus. This is Core protein VP7 (Segment-7) from Epizootic hemorrhagic disease virus 1 (EHDV-1).